The primary structure comprises 405 residues: Acetylornithine/succinyldiaminopimelate aminotransferase (405 aa).

Pyridoxal 5'-phosphate-binding positions include 107–108 (GA) and Phe140. Arg143 contributes to the N(2)-acetyl-L-ornithine binding site. 225-228 (DEVQ) is a binding site for pyridoxal 5'-phosphate. N6-(pyridoxal phosphate)lysine is present on Lys254. A N(2)-acetyl-L-ornithine-binding site is contributed by Thr282. Thr283 is a pyridoxal 5'-phosphate binding site.

Belongs to the class-III pyridoxal-phosphate-dependent aminotransferase family. ArgD subfamily. As to quaternary structure, homodimer. Requires pyridoxal 5'-phosphate as cofactor.

The protein resides in the cytoplasm. It carries out the reaction N(2)-acetyl-L-ornithine + 2-oxoglutarate = N-acetyl-L-glutamate 5-semialdehyde + L-glutamate. The catalysed reaction is N-succinyl-(2S,6S)-2,6-diaminopimelate + 2-oxoglutarate = (S)-2-succinylamino-6-oxoheptanedioate + L-glutamate. The protein operates within amino-acid biosynthesis; L-arginine biosynthesis; N(2)-acetyl-L-ornithine from L-glutamate: step 4/4. It participates in amino-acid biosynthesis; L-lysine biosynthesis via DAP pathway; LL-2,6-diaminopimelate from (S)-tetrahydrodipicolinate (succinylase route): step 2/3. Involved in both the arginine and lysine biosynthetic pathways. This chain is Acetylornithine/succinyldiaminopimelate aminotransferase, found in Yersinia pestis.